Here is a 102-residue protein sequence, read N- to C-terminus: Cytochrome c-553 (102 aa).

A signal peptide spans 1 to 23 (MKRILVVMSICAALAFGVSAAMA). Residues Cys-33, Cys-36, His-37, and Met-80 each coordinate heme c.

Post-translationally, binds 1 heme c group covalently per subunit.

It is found in the periplasm. Functionally, natural electron acceptor for a formate dehydrogenase. This Nitratidesulfovibrio vulgaris (strain DSM 19637 / Miyazaki F) (Desulfovibrio vulgaris) protein is Cytochrome c-553.